Consider the following 628-residue polypeptide: Kelch-like protein diablo (628 aa).

Residues 1–56 are disordered; that stretch reads MGDLPGSTGGGSGPAAAGNASGNASSAGNTGLGVAGTTGVDRPPSPARLSHTSEKH. Positions 14–29 are enriched in low complexity; that stretch reads PAAAGNASGNASSAGN. Residues 74 to 141 enclose the BTB domain; the sequence is CDVVLNVGGR…CYTAHIIVEE (68 aa). Residues 176 to 278 enclose the BACK domain; the sequence is CLGIRAFADT…SPKFLVGTVG (103 aa). 6 Kelch repeats span residues 325 to 371, 373 to 419, 420 to 466, 468 to 513, 515 to 560, and 561 to 607; these read VLFA…VLND, LYAV…VLDG, FLYA…VLGG, LYAI…VFNN, IYAV…VVNG, and QLYA…VMRA.

The protein operates within protein modification; protein ubiquitination. Probable substrate-specific adapter of an E3 ubiquitin-protein ligase complex which mediates the ubiquitination and subsequent proteasomal degradation of target proteins. May have a role in synapse differentiation and growth. The sequence is that of Kelch-like protein diablo from Drosophila pseudoobscura pseudoobscura (Fruit fly).